We begin with the raw amino-acid sequence, 365 residues long: MKGRWVKYLLMGTVVAMLAACSSKPTDRGQQYKDGKFTQPFSLVNQPDAVGAPINAGDFAEQINHIRNSSPRLYGNQSNVYNAVQEWLRAGGDTRNMRQFGIDAWQMEGADNYGNVQFTGYYTPVIQARHTRQGEFQYPIYRMPPKRGRLPSRAEIYAGALSDKYILAYSNSLMDNFIMDVQGSGYIDFGDGSPLNFFSYAGKNGHAYRSIGKVLIDRGEVKKEDMSMQAIRHWGETHSEAEVRELLEQNPSFVFFKPQSFAPVKGASAVPLVGRASVASDRSIIPPGTTLLAEVPLLDNNGKFNGQYELRLMVALDVGGAIKGQHFDIYQGIGPEAGHRAGWYNHYGRVWVLKTAPGAGNVFSG.

A signal peptide spans 1–20 (MKGRWVKYLLMGTVVAMLAA). Cys-21 is lipidated: N-palmitoyl cysteine. Cys-21 carries the S-diacylglycerol cysteine lipid modification.

The protein localises to the cell outer membrane. The enzyme catalyses Exolytic cleavage of the (1-&gt;4)-beta-glycosidic linkage between N-acetylmuramic acid (MurNAc) and N-acetylglucosamine (GlcNAc) residues in peptidoglycan, from either the reducing or the non-reducing ends of the peptidoglycan chains, with concomitant formation of a 1,6-anhydrobond in the MurNAc residue.. In terms of biological role, murein-degrading enzyme. May play a role in recycling of muropeptides during cell elongation and/or cell division. Degrades murein glycan strands and insoluble, high-molecular weight murein sacculi. The sequence is that of Membrane-bound lytic murein transglycosylase A (mltA) from Escherichia coli O157:H7.